We begin with the raw amino-acid sequence, 170 residues long: Large ribosomal subunit protein uL15 (170 aa).

The segment covering 1 to 12 (MKLHDLRPAEGS) has biased composition (basic and acidic residues). The tract at residues 1 to 50 (MKLHDLRPAEGSHRKRKRIGRGHGSGKVKTGGKGMMGQKARSGPGPYRTF) is disordered. Over residues 13-26 (HRKRKRIGRGHGSG) the composition is skewed to basic residues.

The protein belongs to the universal ribosomal protein uL15 family. In terms of assembly, part of the 50S ribosomal subunit.

Functionally, binds to the 23S rRNA. This Chloroflexus aggregans (strain MD-66 / DSM 9485) protein is Large ribosomal subunit protein uL15.